The following is a 341-amino-acid chain: Acetylpolyamine amidohydrolase (341 aa).

Residues Tyr-19, Glu-106, and Glu-117 each contribute to the substrate site. The active-site Proton donor/acceptor is His-159. 3 residues coordinate Zn(2+): Asp-195, His-197, and Asp-284. Substrate is bound at residue Tyr-323.

This sequence belongs to the histone deacetylase family. Homodimer. Requires Zn(2+) as cofactor.

The catalysed reaction is N-acetylputrescine + H2O = putrescine + acetate. It catalyses the reaction N-acetylcadaverine + H2O = cadaverine + acetate. The enzyme catalyses N(1)-acetylspermine + H2O = spermine + acetate. It carries out the reaction N(1)-acetylspermidine + H2O = spermidine + acetate. The catalysed reaction is N(8)-acetylspermidine + H2O = spermidine + acetate. The protein operates within amine and polyamine metabolism. Zinc ions inhibit enzyme activity in a dose-dependent manner. Inhibited by KCl at concentrations above 10 mM. Inhibited by o-oxyquinoline in vitro, suggesting that it is a metalloprotein. Inhibited by various substrate N(8)-acetylspermidine analogs bearing different metal-binding groups such as trifluoromethylketone, thiol, or hydroxamate, and by hydroxamate analogs of short-chain acetyldiamines. Functionally, involved in polyamine metabolism. Catalyzes the deacetylation of various acetylated polyamines such as N-acetylputrescine, N-acetylcadaverine, N(1)-acetylspermine, N(1)-acetylspermidine and N(8)-acetylspermidine. In vitro, is also able to deacetylate L-Lys(epsilon-acetyl)coumarin, but has very low activity towards the larger tetrapeptide N-acetyl-L-Arg-L-His-L-Lys(epsilon-acetyl)-L-Lys(epsilon-acetyl)coumarin. The sequence is that of Acetylpolyamine amidohydrolase from Mycoplana ramosa (Mycoplana bullata).